Reading from the N-terminus, the 227-residue chain is Cytochrome c oxidase subunit 2 (227 aa).

The Mitochondrial intermembrane segment spans residues 1–14; it reads MAHAAQVGLQDATS. A helical membrane pass occupies residues 15–45; that stretch reads PIMEELITFHDHALMIIFLICFLVLYALFLT. The Mitochondrial matrix segment spans residues 46-59; it reads LTTKLTNTNISDAQ. A helical membrane pass occupies residues 60-87; sequence EMETVWTILPAIILVLIALPSLRILYMT. Over 88–227 the chain is Mitochondrial intermembrane; that stretch reads DEVNDPSLTI…IFEMGPVFTL (140 aa). 6 residues coordinate Cu cation: His161, Cys196, Glu198, Cys200, His204, and Met207. Glu198 is a Mg(2+) binding site.

The protein belongs to the cytochrome c oxidase subunit 2 family. As to quaternary structure, component of the cytochrome c oxidase (complex IV, CIV), a multisubunit enzyme composed of 14 subunits. The complex is composed of a catalytic core of 3 subunits MT-CO1, MT-CO2 and MT-CO3, encoded in the mitochondrial DNA, and 11 supernumerary subunits COX4I1 (or COX4I2), COX5A, COX5B, COX6A1 (or COX6A2), COX6B1 (or COX6B2), COX6C, COX7A2 (or COX7A1), COX7B, COX7C, COX8A and NDUFA4, which are encoded in the nuclear genome. The complex exists as a monomer or a dimer and forms supercomplexes (SCs) in the inner mitochondrial membrane with NADH-ubiquinone oxidoreductase (complex I, CI) and ubiquinol-cytochrome c oxidoreductase (cytochrome b-c1 complex, complex III, CIII), resulting in different assemblies (supercomplex SCI(1)III(2)IV(1) and megacomplex MCI(2)III(2)IV(2)). Found in a complex with TMEM177, COA6, COX18, COX20, SCO1 and SCO2. Interacts with TMEM177 in a COX20-dependent manner. Interacts with COX20. Interacts with COX16. Cu cation is required as a cofactor.

It localises to the mitochondrion inner membrane. It carries out the reaction 4 Fe(II)-[cytochrome c] + O2 + 8 H(+)(in) = 4 Fe(III)-[cytochrome c] + 2 H2O + 4 H(+)(out). Functionally, component of the cytochrome c oxidase, the last enzyme in the mitochondrial electron transport chain which drives oxidative phosphorylation. The respiratory chain contains 3 multisubunit complexes succinate dehydrogenase (complex II, CII), ubiquinol-cytochrome c oxidoreductase (cytochrome b-c1 complex, complex III, CIII) and cytochrome c oxidase (complex IV, CIV), that cooperate to transfer electrons derived from NADH and succinate to molecular oxygen, creating an electrochemical gradient over the inner membrane that drives transmembrane transport and the ATP synthase. Cytochrome c oxidase is the component of the respiratory chain that catalyzes the reduction of oxygen to water. Electrons originating from reduced cytochrome c in the intermembrane space (IMS) are transferred via the dinuclear copper A center (CU(A)) of subunit 2 and heme A of subunit 1 to the active site in subunit 1, a binuclear center (BNC) formed by heme A3 and copper B (CU(B)). The BNC reduces molecular oxygen to 2 water molecules using 4 electrons from cytochrome c in the IMS and 4 protons from the mitochondrial matrix. This chain is Cytochrome c oxidase subunit 2 (MT-CO2), found in Homo sapiens (Human).